The primary structure comprises 187 residues: ATP synthase subunit b 2 (187 aa).

The helical transmembrane segment at 39-61 (SQLVWLVLSFAALYLLMSRVALP) threads the bilayer.

This sequence belongs to the ATPase B chain family. In terms of assembly, F-type ATPases have 2 components, F(1) - the catalytic core - and F(0) - the membrane proton channel. F(1) has five subunits: alpha(3), beta(3), gamma(1), delta(1), epsilon(1). F(0) has three main subunits: a(1), b(2) and c(10-14). The alpha and beta chains form an alternating ring which encloses part of the gamma chain. F(1) is attached to F(0) by a central stalk formed by the gamma and epsilon chains, while a peripheral stalk is formed by the delta and b chains.

The protein resides in the cell inner membrane. F(1)F(0) ATP synthase produces ATP from ADP in the presence of a proton or sodium gradient. F-type ATPases consist of two structural domains, F(1) containing the extramembraneous catalytic core and F(0) containing the membrane proton channel, linked together by a central stalk and a peripheral stalk. During catalysis, ATP synthesis in the catalytic domain of F(1) is coupled via a rotary mechanism of the central stalk subunits to proton translocation. In terms of biological role, component of the F(0) channel, it forms part of the peripheral stalk, linking F(1) to F(0). This chain is ATP synthase subunit b 2, found in Parvibaculum lavamentivorans (strain DS-1 / DSM 13023 / NCIMB 13966).